We begin with the raw amino-acid sequence, 186 residues long: Peptidyl-tRNA hydrolase (186 aa).

Residue tyrosine 14 participates in tRNA binding. The active-site Proton acceptor is histidine 19. 3 residues coordinate tRNA: phenylalanine 64, asparagine 66, and asparagine 112.

This sequence belongs to the PTH family. In terms of assembly, monomer.

The protein resides in the cytoplasm. It catalyses the reaction an N-acyl-L-alpha-aminoacyl-tRNA + H2O = an N-acyl-L-amino acid + a tRNA + H(+). Functionally, hydrolyzes ribosome-free peptidyl-tRNAs (with 1 or more amino acids incorporated), which drop off the ribosome during protein synthesis, or as a result of ribosome stalling. Catalyzes the release of premature peptidyl moieties from peptidyl-tRNA molecules trapped in stalled 50S ribosomal subunits, and thus maintains levels of free tRNAs and 50S ribosomes. This is Peptidyl-tRNA hydrolase from Listeria monocytogenes serovar 1/2a (strain ATCC BAA-679 / EGD-e).